A 175-amino-acid chain; its full sequence is Peptide deformylase 1 (175 aa).

Fe cation-binding residues include Cys99 and His141. Residue Glu142 is part of the active site. Residue His145 participates in Fe cation binding.

Belongs to the polypeptide deformylase family. Fe(2+) is required as a cofactor.

The catalysed reaction is N-terminal N-formyl-L-methionyl-[peptide] + H2O = N-terminal L-methionyl-[peptide] + formate. Its function is as follows. Removes the formyl group from the N-terminal Met of newly synthesized proteins. Requires at least a dipeptide for an efficient rate of reaction. N-terminal L-methionine is a prerequisite for activity but the enzyme has broad specificity at other positions. The polypeptide is Peptide deformylase 1 (Rickettsia conorii (strain ATCC VR-613 / Malish 7)).